The chain runs to 623 residues: uncharacterized protein (623 aa).

One can recognise a GAF domain in the interval 28 to 171 (TSAEVSQRVL…TIATLFAQVQ (144 aa)). The GGDEF domain occupies 212–345 (GPVAALFLDL…GGDSVAIFTA (134 aa)). An EAL domain is found at 354-609 (RNDIELHLRR…AMRHMLSARR (256 aa)).

This is an uncharacterized protein from Mycobacterium tuberculosis (strain CDC 1551 / Oshkosh).